Reading from the N-terminus, the 430-residue chain is Histidine--tRNA ligase (430 aa).

Belongs to the class-II aminoacyl-tRNA synthetase family.

Its subcellular location is the cytoplasm. The catalysed reaction is tRNA(His) + L-histidine + ATP = L-histidyl-tRNA(His) + AMP + diphosphate + H(+). The chain is Histidine--tRNA ligase from Metallosphaera sedula (strain ATCC 51363 / DSM 5348 / JCM 9185 / NBRC 15509 / TH2).